The chain runs to 749 residues: Replication restart protein PriA (749 aa).

The 168-residue stretch at 224 to 391 folds into the Helicase ATP-binding domain; that stretch reads SLKTSQFHTH…LSGKYVLSRL (168 aa). 237–244 is a binding site for ATP; sequence GITGSGKT. Residues 333-336 carry the DEAH box motif; the sequence is DEEH. Zn(2+)-binding residues include cysteine 454, cysteine 457, cysteine 463, cysteine 466, cysteine 481, cysteine 484, cysteine 495, and cysteine 498. The 169-residue stretch at 490 to 658 folds into the Helicase C-terminal domain; sequence DLPQSCPKCL…EYPPFIRLIR (169 aa).

It belongs to the helicase family. PriA subfamily. In terms of assembly, component of the replication restart primosome. It depends on Zn(2+) as a cofactor.

The catalysed reaction is Couples ATP hydrolysis with the unwinding of duplex DNA by translocating in the 3'-5' direction.. It catalyses the reaction ATP + H2O = ADP + phosphate + H(+). Initiates the restart of stalled replication forks, which reloads the replicative helicase on sites other than the origin of replication. Recognizes and binds to abandoned replication forks and remodels them to uncover a helicase loading site. Promotes assembly of the primosome at these replication forks. This Chlamydia pneumoniae (Chlamydophila pneumoniae) protein is Replication restart protein PriA.